A 522-amino-acid chain; its full sequence is Zinc finger and BTB domain-containing protein 18 (522 aa).

The BTB domain maps to Cys24 to Asp91. The segment covering Ala121–Ser143 has biased composition (basic and acidic residues). The interval Ala121–Glu165 is disordered. Ser157 carries the phosphoserine modification. Lys273 is covalently cross-linked (Glycyl lysine isopeptide (Lys-Gly) (interchain with G-Cter in SUMO2)). Positions Glu310–Arg427 are interaction with DNMT3A. C2H2-type zinc fingers lie at residues Phe370–His392, Pro410–His432, Tyr438–His460, and His466–His489. Residues Ser516 and Ser517 each carry the phosphoserine modification.

Belongs to the krueppel C2H2-type zinc-finger protein family. ZBTB18 subfamily. In terms of assembly, interacts with DNMT3A.

It is found in the nucleus. Functionally, transcriptional repressor that plays a role in various developmental processes such as myogenesis and brain development. Specifically binds the consensus DNA sequence 5'-[AC]ACATCTG[GT][AC]-3' which contains the E box core, and acts by recruiting chromatin remodeling multiprotein complexes. Plays a key role in myogenesis by directly repressing the expression of ID2 and ID3, 2 inhibitors of skeletal myogenesis. Also involved in controlling cell division of progenitor cells and regulating the survival of postmitotic cortical neurons. May also play a role in the organization of chromosomes in the nucleus. The sequence is that of Zinc finger and BTB domain-containing protein 18 (ZBTB18) from Bos taurus (Bovine).